A 402-amino-acid chain; its full sequence is Zinc finger protein 809 (402 aa).

Residues Val-4–Gly-75 form the KRAB domain. Residues Gln-118 to Lys-139 are disordered. Residues Thr-125–Lys-139 are compositionally biased toward basic residues. 7 consecutive C2H2-type zinc fingers follow at residues Tyr-155–His-178, Tyr-184–His-206, Tyr-213–His-235, Tyr-241–His-263, Phe-269–His-291, Tyr-297–His-319, and Tyr-325–His-347.

It belongs to the krueppel C2H2-type zinc-finger protein family.

The protein resides in the nucleus. In terms of biological role, transcription factor specifically required to repress retrotransposons in embryonic stem cells. Recognizes and binds retroviral DNA sequences from a large subset of mammalian retroviruses and retroelements and repress their expression by recruiting a repressive complex containing TRIM28/KAP1. In Mus musculus (Mouse), this protein is Zinc finger protein 809.